The following is a 201-amino-acid chain: uncharacterized protein (201 aa).

Positions 1-25 are cleaved as a signal peptide; sequence MYRAGVTLLVVAVVSLGRWDVVTMA. Topologically, residues 26–170 are extracellular; it reads AAIGIGWYEP…AYFRRSNHRA (145 aa). N-linked (GlcNAc...) asparagine; by host glycosylation is found at asparagine 46, asparagine 49, asparagine 55, asparagine 84, asparagine 95, asparagine 113, asparagine 122, asparagine 137, and asparagine 144. The helical transmembrane segment at 171–191 threads the bilayer; sequence FMIVILTQVVFVVFIINASFI. Residues 192–201 are Cytoplasmic-facing; sequence WSWTFRRHKR.

The protein belongs to the HHV-5 UL120 protein family.

The protein resides in the host membrane. This is an uncharacterized protein from Homo sapiens (Human).